We begin with the raw amino-acid sequence, 278 residues long: MRADPASAAADIFEANRARGAVRFDVRLQDGMTRRHHLHESGSLRVRFPSPEDDGLSAMFVNTAGGIAGGDRFAVEVAAGEGSRVTLSSAAAEKVYRAPGKPAELDIALTAAAGAHIAWLPQETILFDRARIHRRIDIDLAATASLLLCEIVVFGRTAMGERMREGEFVDRWRLRRGGRLVFAETVRLDGDIGGKLAHPAIANGAAAIGTALIVPGDAALVERIRESLPAFRGEAGLSAWNGFAMARFCAQDAASLRADMMAVLGCASAVPLPRLWLN.

Belongs to the UreD family. As to quaternary structure, ureD, UreF and UreG form a complex that acts as a GTP-hydrolysis-dependent molecular chaperone, activating the urease apoprotein by helping to assemble the nickel containing metallocenter of UreC. The UreE protein probably delivers the nickel.

Its subcellular location is the cytoplasm. Its function is as follows. Required for maturation of urease via the functional incorporation of the urease nickel metallocenter. This chain is Urease accessory protein UreD 3, found in Bradyrhizobium sp. (strain BTAi1 / ATCC BAA-1182).